We begin with the raw amino-acid sequence, 80 residues long: MCQILLAILAIFLPPIAVLLDVGCNCDLLINILLTCLGIIPGIIHAWYIILCKEKTVVQNIYVQTNDHGTAPPAYSPYSA.

Transmembrane regions (helical) follow at residues 4–24 and 32–52; these read ILLAILAIFLPPIAVLLDVGC and ILLTCLGIIPGIIHAWYIILC.

It belongs to the UPF0057 (PMP3) family.

It localises to the membrane. This is UPF0057 membrane protein ZK632.10 from Caenorhabditis elegans.